A 124-amino-acid polypeptide reads, in one-letter code: NADH dehydrogenase [ubiquinone] 1 alpha subcomplex subunit 6 (124 aa).

Belongs to the complex I LYR family.

It is found in the mitochondrion inner membrane. Accessory subunit of the mitochondrial membrane respiratory chain NADH dehydrogenase (Complex I), that is believed to be not involved in catalysis. Complex I functions in the transfer of electrons from NADH to the respiratory chain. The immediate electron acceptor for the enzyme is believed to be ubiquinone. The polypeptide is NADH dehydrogenase [ubiquinone] 1 alpha subcomplex subunit 6 (ndufa6) (Dictyostelium discoideum (Social amoeba)).